Here is a 158-residue protein sequence, read N- to C-terminus: Regulator of sigma D (158 aa).

It belongs to the Rsd/AlgQ family. Interacts with RpoD.

The protein localises to the cytoplasm. Its function is as follows. Binds RpoD and negatively regulates RpoD-mediated transcription activation by preventing the interaction between the primary sigma factor RpoD with the catalytic core of the RNA polymerase and with promoter DNA. May be involved in replacement of the RNA polymerase sigma subunit from RpoD to RpoS during the transition from exponential growth to the stationary phase. The polypeptide is Regulator of sigma D (Escherichia coli O127:H6 (strain E2348/69 / EPEC)).